Here is a 128-residue protein sequence, read N- to C-terminus: Small ribosomal subunit protein uS11 (128 aa).

Belongs to the universal ribosomal protein uS11 family. Part of the 30S ribosomal subunit. Interacts with proteins S7 and S18. Binds to IF-3.

In terms of biological role, located on the platform of the 30S subunit, it bridges several disparate RNA helices of the 16S rRNA. Forms part of the Shine-Dalgarno cleft in the 70S ribosome. In Wolbachia pipientis subsp. Culex pipiens (strain wPip), this protein is Small ribosomal subunit protein uS11.